Reading from the N-terminus, the 303-residue chain is Secreted mono- and diacylglycerol lipase LIP4 (303 aa).

The signal sequence occupies residues 1-16 (MHFLAFLLCLIPLALC). An intrachain disulfide couples Cys-54 to Cys-293. Ser-167 (nucleophile) is an active-site residue. Asp-224 is an active-site residue.

It belongs to the AB hydrolase superfamily. Lipase family. Class 3 subfamily.

The protein resides in the secreted. The catalysed reaction is a monoacylglycerol + H2O = glycerol + a fatty acid + H(+). The enzyme catalyses a diacylglycerol + H2O = a monoacylglycerol + a fatty acid + H(+). Functionally, secreted lipase involved in Dandruff and seborrheic dermatitis (D/SD) probably via lipase-mediated breakdown of sebaceous lipids and release of irritating free fatty acids. Shows activity against monoglyceride and diglyceride substrates. Due to an absence of fatty acid synthase genes in Malassezia species, secretory lipases are essential for the yeast to generate free fatty acids from degradation of sebum and assimilate them as lipid sources for growth. Plays an essential role at the pathogen-host interface during disease progression. This is Secreted mono- and diacylglycerol lipase LIP4 from Malassezia restricta (strain ATCC 96810 / NBRC 103918 / CBS 7877) (Seborrheic dermatitis infection agent).